The sequence spans 274 residues: WIMGHMVNKKYQVDEFANLGANAIEFDVTFDPNSKADYTYHKVPCDCGRTCGKYEVFTEFLSYVRNKTTPGHPSFREKLILLQLDLKMSGFSDSESNEAGKDVAKKLLNYYWNRGSNGGRAYILLSIPSIDNQLFLKGFKLQLETEGYSEYLEKVGVDFSANEDLNSILNVLGRLEEEHVWQSDGITDCLARRSTRLRDAIKKRDTGDDRYGIKKVYTWTVDYYPSIRYYLRLGIDGVMTNFPNRVEYILNEEEFSGSLRMATIDDNPWEKYVG.

Histidine 5 is an active-site residue. Residues glutamate 25 and aspartate 27 each coordinate Mg(2+). Catalysis depends on histidine 41, which acts as the Nucleophile. Disulfide bonds link cysteine 45–cysteine 51 and cysteine 47–cysteine 189. An N-linked (GlcNAc...) asparagine glycan is attached at asparagine 66. Aspartate 85 lines the Mg(2+) pocket.

The protein belongs to the arthropod phospholipase D family. Class II subfamily. Mg(2+) is required as a cofactor. As to expression, expressed by the venom gland.

The protein resides in the secreted. The enzyme catalyses an N-(acyl)-sphingosylphosphocholine = an N-(acyl)-sphingosyl-1,3-cyclic phosphate + choline. The catalysed reaction is an N-(acyl)-sphingosylphosphoethanolamine = an N-(acyl)-sphingosyl-1,3-cyclic phosphate + ethanolamine. It carries out the reaction a 1-acyl-sn-glycero-3-phosphocholine = a 1-acyl-sn-glycero-2,3-cyclic phosphate + choline. It catalyses the reaction a 1-acyl-sn-glycero-3-phosphoethanolamine = a 1-acyl-sn-glycero-2,3-cyclic phosphate + ethanolamine. Its function is as follows. Dermonecrotic toxins cleave the phosphodiester linkage between the phosphate and headgroup of certain phospholipids (sphingolipid and lysolipid substrates), forming an alcohol (often choline) and a cyclic phosphate. This toxin acts on sphingomyelin (SM). It may also act on ceramide phosphoethanolamine (CPE), lysophosphatidylcholine (LPC) and lysophosphatidylethanolamine (LPE), but not on lysophosphatidylserine (LPS), and lysophosphatidylglycerol (LPG). It acts by transphosphatidylation, releasing exclusively cyclic phosphate products as second products. Induces dermonecrosis, hemolysis, increased vascular permeability, edema, inflammatory response, and platelet aggregation. The sequence is that of Dermonecrotic toxin LspiSicTox-betaIII1 G from Loxosceles spinulosa (Recluse spider).